Reading from the N-terminus, the 421-residue chain is MFTRNMTIADYDPVLWQAIQDENRRQEEHIELIASENYASPRVMEAQGSQFTNKYAEGYPGKRYYGGCEYADIVEQLAIDRAKELFGADYVNVQPHSGSQANAAVYGALINAGDTILGMDLAHGGHLTHGAKVSFSGKIYNSVLYGITADGLIDYEDVRQKALECKPKLIVAGFSAYSQVVDWAKMREIADEVGAYLFVDMAHVAGLIAAGLYPNPLPHAHVVTTTTHKTLGGPRGGLILSSCGDEEIYKKLQSSVFPANQGGPLVHIIAAKAVCFKGALEPQYKEYQANVIKNAKAMVEVFKQRGYDVVSNGTENHLFLVSFIKQGLTGKAADAALGKANITVNKNAVPNDPQKPFVTSGIRVGTPSVTRRGFNENDVRELAGWMCDVLDALGKENEEQVIAETKEKVLAICKRLPVYPK.

Residues leucine 121 and 125–127 (GHL) contribute to the (6S)-5,6,7,8-tetrahydrofolate site. N6-(pyridoxal phosphate)lysine is present on lysine 229.

It belongs to the SHMT family. In terms of assembly, homodimer. Requires pyridoxal 5'-phosphate as cofactor.

The protein resides in the cytoplasm. The catalysed reaction is (6R)-5,10-methylene-5,6,7,8-tetrahydrofolate + glycine + H2O = (6S)-5,6,7,8-tetrahydrofolate + L-serine. Its pathway is one-carbon metabolism; tetrahydrofolate interconversion. It functions in the pathway amino-acid biosynthesis; glycine biosynthesis; glycine from L-serine: step 1/1. Its function is as follows. Catalyzes the reversible interconversion of serine and glycine with tetrahydrofolate (THF) serving as the one-carbon carrier. This reaction serves as the major source of one-carbon groups required for the biosynthesis of purines, thymidylate, methionine, and other important biomolecules. Also exhibits THF-independent aldolase activity toward beta-hydroxyamino acids, producing glycine and aldehydes, via a retro-aldol mechanism. The polypeptide is Serine hydroxymethyltransferase (Haemophilus influenzae (strain ATCC 51907 / DSM 11121 / KW20 / Rd)).